Consider the following 83-residue polypeptide: Putative beta-neurotoxin RjAa15f (83 aa).

The signal sequence occupies residues 1-18; the sequence is MKILIFIIASFMLIGVEC. One can recognise an LCN-type CS-alpha/beta domain in the interval 19 to 82; it reads KEGYPMGRNG…VWDSSNNKCV (64 aa). 4 disulfides stabilise this stretch: C29-C81, C33-C55, C40-C62, and C44-C64.

Belongs to the long (4 C-C) scorpion toxin superfamily. Sodium channel inhibitor family. Beta subfamily. In terms of tissue distribution, expressed by the venom gland.

The protein resides in the secreted. Its function is as follows. Beta toxins bind voltage-independently at site-4 of sodium channels (Nav) and shift the voltage of activation toward more negative potentials thereby affecting sodium channel activation and promoting spontaneous and repetitive firing. The sequence is that of Putative beta-neurotoxin RjAa15f from Rhopalurus junceus (Caribbean blue scorpion).